Reading from the N-terminus, the 326-residue chain is DNA-directed RNA polymerase subunit alpha (326 aa).

Residues 1-232 are alpha N-terminal domain (alpha-NTD); sequence MQGSARDFLK…EQLSSFVELE (232 aa). The alpha C-terminal domain (alpha-CTD) stretch occupies residues 246 to 326; sequence FDPQLLAAVD…NWPPVDLMSE (81 aa).

Belongs to the RNA polymerase alpha chain family. Homodimer. The RNAP catalytic core consists of 2 alpha, 1 beta, 1 beta' and 1 omega subunit. When a sigma factor is associated with the core the holoenzyme is formed, which can initiate transcription.

The catalysed reaction is RNA(n) + a ribonucleoside 5'-triphosphate = RNA(n+1) + diphosphate. DNA-dependent RNA polymerase catalyzes the transcription of DNA into RNA using the four ribonucleoside triphosphates as substrates. This chain is DNA-directed RNA polymerase subunit alpha, found in Vesicomyosocius okutanii subsp. Calyptogena okutanii (strain HA).